A 257-amino-acid chain; its full sequence is NAD-capped RNA hydrolase NudC (257 aa).

A substrate-binding site is contributed by Arg69. The Zn(2+) site is built by Cys98 and Cys101. Substrate is bound at residue Glu111. Cys116 and Cys119 together coordinate Zn(2+). Tyr124 serves as a coordination point for substrate. The 124-residue stretch at 125–248 (PQIAPCIIVA…TVARRLIEDT (124 aa)) folds into the Nudix hydrolase domain. A divalent metal cation is bound by residues Ala158, Glu174, and Glu178. The Nudix box motif lies at 159–180 (GFVEVGETLEQAVAREVMEESG). Residue 192-199 (QPWPFPQS) coordinates substrate. A divalent metal cation is bound at residue Glu219. A substrate-binding site is contributed by Ala241.

It belongs to the Nudix hydrolase family. NudC subfamily. In terms of assembly, homodimer. Requires Mg(2+) as cofactor. It depends on Mn(2+) as a cofactor. Zn(2+) serves as cofactor.

The enzyme catalyses a 5'-end NAD(+)-phospho-ribonucleoside in mRNA + H2O = a 5'-end phospho-adenosine-phospho-ribonucleoside in mRNA + beta-nicotinamide D-ribonucleotide + 2 H(+). It catalyses the reaction NAD(+) + H2O = beta-nicotinamide D-ribonucleotide + AMP + 2 H(+). It carries out the reaction NADH + H2O = reduced beta-nicotinamide D-ribonucleotide + AMP + 2 H(+). Functionally, mRNA decapping enzyme that specifically removes the nicotinamide adenine dinucleotide (NAD) cap from a subset of mRNAs by hydrolyzing the diphosphate linkage to produce nicotinamide mononucleotide (NMN) and 5' monophosphate mRNA. The NAD-cap is present at the 5'-end of some mRNAs and stabilizes RNA against 5'-processing. Has preference for mRNAs with a 5'-end purine. Catalyzes the hydrolysis of a broad range of dinucleotide pyrophosphates. In Salmonella typhi, this protein is NAD-capped RNA hydrolase NudC.